Here is a 161-residue protein sequence, read N- to C-terminus: Putative ecotin-like protein (161 aa).

The N-terminal stretch at 1 to 24 (MSLRPIETAIASLTMLMLQGCAHA) is a signal peptide.

The protein belongs to the protease inhibitor I11 (ecotin) family.

The protein is Putative ecotin-like protein of Methylobacillus flagellatus (strain ATCC 51484 / DSM 6875 / VKM B-1610 / KT).